A 199-amino-acid chain; its full sequence is Superoxide dismutase [Fe] (199 aa).

Positions 27, 74, 158, and 162 each coordinate Fe cation.

It belongs to the iron/manganese superoxide dismutase family. As to quaternary structure, homodimer. Fe cation is required as a cofactor.

The catalysed reaction is 2 superoxide + 2 H(+) = H2O2 + O2. In terms of biological role, destroys superoxide anion radicals which are normally produced within the cells and which are toxic to biological systems. The chain is Superoxide dismutase [Fe] (SODB) from Babesia bovis.